The chain runs to 272 residues: MNNKVHQGHFARKRFGQNFLTDQFVIDSIVSAIHPMPGEAVVEIGPGLGALTEPVGARMDRMTVIELDRDLAARLANHPQLKDKLTIHQQDAMTVNFAEMAEQAGQPLRVFGNLPYNISTPLMFHLFSYTQAIRDMHFMLQKEVVNRLVAGPNSKAYGRLTVMAQYYCNVIPVLEVPPTSFTPAPKVDSAVVRLVPHLVNPNPVGDVRMLSRITTQAFNQRRKTVRNSLGDLFTPEQLTELGIDPILRAENISVAQYCKLANWLSANPAPQQ.

Residues asparagine 18, leucine 20, glycine 45, glutamate 66, aspartate 91, and asparagine 113 each coordinate S-adenosyl-L-methionine.

This sequence belongs to the class I-like SAM-binding methyltransferase superfamily. rRNA adenine N(6)-methyltransferase family. RsmA subfamily.

The protein resides in the cytoplasm. It carries out the reaction adenosine(1518)/adenosine(1519) in 16S rRNA + 4 S-adenosyl-L-methionine = N(6)-dimethyladenosine(1518)/N(6)-dimethyladenosine(1519) in 16S rRNA + 4 S-adenosyl-L-homocysteine + 4 H(+). Functionally, specifically dimethylates two adjacent adenosines (A1518 and A1519) in the loop of a conserved hairpin near the 3'-end of 16S rRNA in the 30S particle. May play a critical role in biogenesis of 30S subunits. The sequence is that of Ribosomal RNA small subunit methyltransferase A from Serratia proteamaculans (strain 568).